A 90-amino-acid chain; its full sequence is Probable acyl carrier protein (90 aa).

The region spanning 9–90 is the Carrier domain; the sequence is QVTVEELSAL…LVNGALKTGV (82 aa). S47 carries the post-translational modification O-(pantetheine 4'-phosphoryl)serine.

Post-translationally, 4'-phosphopantetheine is transferred from CoA to a specific serine of the apo-ACP-like protein.

In terms of biological role, involved in developmentally regulated synthesis of a compound biosynthetically related to polyketide antibiotics which is essential for spore color in Streptomyces coelicolor. In Streptomyces coelicolor (strain ATCC BAA-471 / A3(2) / M145), this protein is Probable acyl carrier protein.